A 476-amino-acid chain; its full sequence is Probable cytosol aminopeptidase (476 aa).

Mn(2+) contacts are provided by Lys-242 and Asp-247. Residue Lys-254 is part of the active site. Mn(2+)-binding residues include Asp-265, Asp-324, and Glu-326. Arg-328 is an active-site residue.

Belongs to the peptidase M17 family. It depends on Mn(2+) as a cofactor.

The protein resides in the cytoplasm. It catalyses the reaction Release of an N-terminal amino acid, Xaa-|-Yaa-, in which Xaa is preferably Leu, but may be other amino acids including Pro although not Arg or Lys, and Yaa may be Pro. Amino acid amides and methyl esters are also readily hydrolyzed, but rates on arylamides are exceedingly low.. The enzyme catalyses Release of an N-terminal amino acid, preferentially leucine, but not glutamic or aspartic acids.. Presumably involved in the processing and regular turnover of intracellular proteins. Catalyzes the removal of unsubstituted N-terminal amino acids from various peptides. This Treponema denticola (strain ATCC 35405 / DSM 14222 / CIP 103919 / JCM 8153 / KCTC 15104) protein is Probable cytosol aminopeptidase.